A 1043-amino-acid polypeptide reads, in one-letter code: Liprin-alpha-4 (1043 aa).

2 coiled-coil regions span residues E24–G332 and I426–S470. The tract at residues S498–I617 is disordered. S500 carries the post-translational modification Phosphoserine. The span at G505–A516 shows a compositional bias: polar residues. S541 is modified (phosphoserine). The span at S544–I555 shows a compositional bias: basic and acidic residues. Residues Q590 to D602 show a composition bias toward low complexity. 3 consecutive SAM domains span residues W688 to L754, N803 to L867, and W891 to L960. The stretch at L864–V890 forms a coiled coil.

This sequence belongs to the liprin family. Liprin-alpha subfamily. Forms homodimers and heterodimers with liprins-alpha and liprins-beta. Interacts with the second PTPase domain of PTPRD, PTPRF and PTPRS. Interacts with RIMS1 and RIMS2. Interacts with GIT1 and GIT2. Interacts with GRIP1. Interacts with KIF1A.

The protein resides in the cytoplasm. Its subcellular location is the cell surface. In terms of biological role, may regulate the disassembly of focal adhesions. May localize receptor-like tyrosine phosphatases type 2A at specific sites on the plasma membrane, possibly regulating their interaction with the extracellular environment and their association with substrates. In Rattus norvegicus (Rat), this protein is Liprin-alpha-4 (Ppfia4).